A 72-amino-acid chain; its full sequence is Translation initiation factor IF-1 (72 aa).

The 72-residue stretch at Met1–Lys72 folds into the S1-like domain.

The protein belongs to the IF-1 family. In terms of assembly, component of the 30S ribosomal translation pre-initiation complex which assembles on the 30S ribosome in the order IF-2 and IF-3, IF-1 and N-formylmethionyl-tRNA(fMet); mRNA recruitment can occur at any time during PIC assembly.

Its subcellular location is the cytoplasm. Its function is as follows. One of the essential components for the initiation of protein synthesis. Stabilizes the binding of IF-2 and IF-3 on the 30S subunit to which N-formylmethionyl-tRNA(fMet) subsequently binds. Helps modulate mRNA selection, yielding the 30S pre-initiation complex (PIC). Upon addition of the 50S ribosomal subunit IF-1, IF-2 and IF-3 are released leaving the mature 70S translation initiation complex. The chain is Translation initiation factor IF-1 from Paracoccus denitrificans (strain Pd 1222).